A 553-amino-acid chain; its full sequence is MADPEVVVSSCSSHEEENRCNFNQQTSPSEELLLEDQMRRKLKFFFMNPCEKFWARGRKPWKLAIQILKIAMVTIQLVLFGLSNQMVVAFKEENTIAFKHLFLKGYMDRMDDTYAVYTQSDVYDQLIFAVNQYLQLYNVSVGNHAYENKGTKQSAMAICQHFYKRGNIYPGNDTFDIDPEIETECFFVEPDEPFHIGTPAENKLNLTLDFHRLLTVELQFKLKAINLQTVRHQELPDCYDFTLTITFDNKAHSGRIKISLDNDISIRECKDWHVSGSIQKNTHYMMIFDAFVILTCLVSLILCIRSVIRGLQLQQEFVNFFLLHYKKEVSVSDQMEFVNGWYIMIIISDILTIIGSILKMEIQAKSLTSYDVCSILLGTSTMLVWLGVIRYLGFFAKYNLLILTLQAALPNVIRFCCCAAMIYLGYCFCGWIVLGPYHDKFRSLNMVSECLFSLINGDDMFATFAKMQQKSYLVWLFSRIYLYSFISLFIYMILSLFIALITDTYETIKQYQQDGFPETELRTFISECKDLPNSGKYRLEDDPPVSLFCCCKK.

The Cytoplasmic portion of the chain corresponds to 1–62 (MADPEVVVSS…FWARGRKPWK (62 aa)). An interaction with phosphoinositides region spans residues 52-62 (KFWARGRKPWK). The helical transmembrane segment at 63-83 (LAIQILKIAMVTIQLVLFGLS) threads the bilayer. Over 84-283 (NQMVVAFKEE…VSGSIQKNTH (200 aa)) the chain is Extracellular. The interval 104 to 118 (KGYMDRMDDTYAVYT) is extracellular/lumenal pore loop. N-linked (GlcNAc...) asparagine glycosylation is found at asparagine 138, asparagine 172, and asparagine 205. The cysteines at positions 159 and 185 are disulfide-linked. An intrachain disulfide couples cysteine 238 to cysteine 269. The chain crosses the membrane as a helical span at residues 284–304 (YMMIFDAFVILTCLVSLILCI). Residues 305 to 341 (RSVIRGLQLQQEFVNFFLLHYKKEVSVSDQMEFVNGW) are Cytoplasmic-facing. A helical membrane pass occupies residues 342–362 (YIMIIISDILTIIGSILKMEI). The Extracellular segment spans residues 363–371 (QAKSLTSYD). A helical membrane pass occupies residues 372-392 (VCSILLGTSTMLVWLGVIRYL). The Cytoplasmic segment spans residues 393 to 414 (GFFAKYNLLILTLQAALPNVIR). A helical membrane pass occupies residues 415 to 435 (FCCCAAMIYLGYCFCGWIVLG). Over 436–443 (PYHDKFRS) the chain is Extracellular. The segment at residues 444-464 (LNMVSECLFSLINGDDMFATF) is an intramembrane region (pore-forming). Residues 456–459 (NGDD) carry the Selectivity filter motif. Over 465–475 (AKMQQKSYLVW) the chain is Extracellular. Residues 476-497 (LFSRIYLYSFISLFIYMILSLF) traverse the membrane as a helical segment. Residues 498-553 (IALITDTYETIKQYQQDGFPETELRTFISECKDLPNSGKYRLEDDPPVSLFCCCKK) lie on the Cytoplasmic side of the membrane.

This sequence belongs to the transient receptor (TC 1.A.4) family. Polycystin subfamily. MCOLN3 sub-subfamily. In terms of assembly, homotetramer. Can heterooligomerize with MCOLN1; heteromeric assemblies have different channel properties as compared to the respective homooligomers and may be tissue-specific. May heterooligomerize with TRPV5 to form a functional distinct ion channel. Interacts with GABARAPL2. In terms of processing, N-glycosylated.

Its subcellular location is the cell membrane. It localises to the early endosome membrane. The protein localises to the late endosome membrane. The protein resides in the lysosome membrane. It is found in the cytoplasmic vesicle. Its subcellular location is the autophagosome membrane. It carries out the reaction Ca(2+)(in) = Ca(2+)(out). The catalysed reaction is K(+)(in) = K(+)(out). It catalyses the reaction Na(+)(in) = Na(+)(out). Channel activity is activated by PtdIns(3,5)P2 (phosphatidylinositol 3,5-bisphosphate). Inhibited by lumenal H(+) and Na(+). The channel pore shows dynamic behavior and undergoes spontaneous, Ca(2+)-dependent modulation when conducting Ca(2+). Nonselective cation channel probably playing a role in the regulation of membrane trafficking events. Acts as a Ca(2+)-permeable cation channel with inwardly rectifying activity. Mediates release of Ca(2+) from endosomes to the cytoplasm, contributes to endosomal acidification and is involved in the regulation of membrane trafficking and fusion in the endosomal pathway. Also permeable to Mg(2+), Na(+) and K(+). Does not seem to act as mechanosensory transduction channel in inner ear sensory hair cells. Proposed to play a critical role at the cochlear stereocilia ankle-link region during hair-bundle growth. Involved in the regulation of autophagy. Through association with GABARAPL2 may be involved in autophagosome formation possibly providing Ca(2+) for the fusion process. Through a possible and probably tissue-specific heteromerization with MCOLN1 may be at least in part involved in many lysosome-dependent cellular events. Possible heteromeric ion channel assemblies with TRPV5 show pharmacological similarity with TRPML3. This Homo sapiens (Human) protein is Mucolipin-3 (MCOLN3).